A 195-amino-acid polypeptide reads, in one-letter code: Large ribosomal subunit protein uL5 (195 aa).

This sequence belongs to the universal ribosomal protein uL5 family. In terms of assembly, part of the 50S ribosomal subunit; part of the 5S rRNA/L5/L18/L25 subcomplex. Contacts the 5S rRNA and the P site tRNA. Forms a bridge to the 30S subunit in the 70S ribosome.

Functionally, this is one of the proteins that bind and probably mediate the attachment of the 5S RNA into the large ribosomal subunit, where it forms part of the central protuberance. In the 70S ribosome it contacts protein S13 of the 30S subunit (bridge B1b), connecting the 2 subunits; this bridge is implicated in subunit movement. Contacts the P site tRNA; the 5S rRNA and some of its associated proteins might help stabilize positioning of ribosome-bound tRNAs. This chain is Large ribosomal subunit protein uL5, found in Chlorobium phaeobacteroides (strain DSM 266 / SMG 266 / 2430).